A 78-amino-acid polypeptide reads, in one-letter code: Small ribosomal subunit protein bS20 (78 aa).

The protein belongs to the bacterial ribosomal protein bS20 family.

Functionally, binds directly to 16S ribosomal RNA. The polypeptide is Small ribosomal subunit protein bS20 (Streptococcus pneumoniae serotype 19F (strain G54)).